A 160-amino-acid polypeptide reads, in one-letter code: uncharacterized protein (160 aa).

Tyr-49 is modified (phosphotyrosine).

May be involved in the assembly, structure, or function of the flagellum. May polymerize to form a filamentous structure that is part of the flagellum. This is an uncharacterized protein from Bacillus subtilis (strain 168).